The sequence spans 178 residues: Large ribosomal subunit protein uL6 (178 aa).

It belongs to the universal ribosomal protein uL6 family. As to quaternary structure, part of the 50S ribosomal subunit.

This protein binds to the 23S rRNA, and is important in its secondary structure. It is located near the subunit interface in the base of the L7/L12 stalk, and near the tRNA binding site of the peptidyltransferase center. This is Large ribosomal subunit protein uL6 from Staphylococcus saprophyticus subsp. saprophyticus (strain ATCC 15305 / DSM 20229 / NCIMB 8711 / NCTC 7292 / S-41).